Reading from the N-terminus, the 169-residue chain is Peptide methionine sulfoxide reductase MsrA (169 aa).

Residue C10 is part of the active site.

Belongs to the MsrA Met sulfoxide reductase family.

It catalyses the reaction L-methionyl-[protein] + [thioredoxin]-disulfide + H2O = L-methionyl-(S)-S-oxide-[protein] + [thioredoxin]-dithiol. The enzyme catalyses [thioredoxin]-disulfide + L-methionine + H2O = L-methionine (S)-S-oxide + [thioredoxin]-dithiol. Its function is as follows. Has an important function as a repair enzyme for proteins that have been inactivated by oxidation. Catalyzes the reversible oxidation-reduction of methionine sulfoxide in proteins to methionine. The protein is Peptide methionine sulfoxide reductase MsrA of Streptococcus mutans serotype c (strain ATCC 700610 / UA159).